A 371-amino-acid polypeptide reads, in one-letter code: Putative glutamate--cysteine ligase 2 (371 aa).

This sequence belongs to the glutamate--cysteine ligase type 2 family. YbdK subfamily.

The enzyme catalyses L-cysteine + L-glutamate + ATP = gamma-L-glutamyl-L-cysteine + ADP + phosphate + H(+). Functionally, ATP-dependent carboxylate-amine ligase which exhibits weak glutamate--cysteine ligase activity. In Burkholderia ambifaria (strain MC40-6), this protein is Putative glutamate--cysteine ligase 2.